Reading from the N-terminus, the 351-residue chain is Phosphate acyltransferase (351 aa).

It belongs to the PlsX family. In terms of assembly, homodimer. Probably interacts with PlsY.

The protein localises to the cytoplasm. It carries out the reaction a fatty acyl-[ACP] + phosphate = an acyl phosphate + holo-[ACP]. The protein operates within lipid metabolism; phospholipid metabolism. In terms of biological role, catalyzes the reversible formation of acyl-phosphate (acyl-PO(4)) from acyl-[acyl-carrier-protein] (acyl-ACP). This enzyme utilizes acyl-ACP as fatty acyl donor, but not acyl-CoA. This is Phosphate acyltransferase from Verminephrobacter eiseniae (strain EF01-2).